The following is a 562-amino-acid chain: Probable tRNA (uracil-O(2)-)-methyltransferase (562 aa).

The segment at 520–546 (VSRRQQTNPKKQEATNRPKQPCWMSLN) is disordered. Residues 535–562 (NRPKQPCWMSLNHPDGCPLGPESCRYLH) form a C3H1-type zinc finger.

This sequence belongs to the TRM44 family.

The protein resides in the cytoplasm. The catalysed reaction is uridine(44) in tRNA(Ser) + S-adenosyl-L-methionine = 2'-O-methyluridine(44) in tRNA(Ser) + S-adenosyl-L-homocysteine + H(+). Functionally, probable adenosyl-L-methionine (AdoMet)-dependent tRNA (uracil-O(2)-)-methyltransferase. This is Probable tRNA (uracil-O(2)-)-methyltransferase from Caenorhabditis briggsae.